The sequence spans 460 residues: Tyrosine phenol-lyase (460 aa).

K260 bears the N6-(pyridoxal phosphate)lysine mark.

This sequence belongs to the beta-eliminating lyase family. As to quaternary structure, homotetramer. Requires pyridoxal 5'-phosphate as cofactor.

The catalysed reaction is L-tyrosine + H2O = phenol + pyruvate + NH4(+). The sequence is that of Tyrosine phenol-lyase from Fusobacterium nucleatum subsp. nucleatum (strain ATCC 25586 / DSM 15643 / BCRC 10681 / CIP 101130 / JCM 8532 / KCTC 2640 / LMG 13131 / VPI 4355).